We begin with the raw amino-acid sequence, 117 residues long: Non-specific lipid-transfer protein 2 (117 aa).

The N-terminal stretch at 1–25 (MAGLMKLACLVLACMIVAGPITSNA) is a signal peptide. Disulfide bonds link Cys29–Cys76, Cys39–Cys53, Cys54–Cys99, and Cys74–Cys113.

Belongs to the plant LTP family.

Its function is as follows. Plant non-specific lipid-transfer proteins transfer phospholipids as well as galactolipids across membranes. May play a role in wax or cutin deposition in the cell walls of expanding epidermal cells and certain secretory tissues. The chain is Non-specific lipid-transfer protein 2 (LTP2) from Brassica napus (Rape).